The chain runs to 1147 residues: GPI inositol-deacylase (1147 aa).

Residues 1 to 94 (MRRHSSGSSE…RTSPSSPLGL (94 aa)) form a disordered region. Asn-23 is a glycosylation site (N-linked (GlcNAc...) asparagine). Residues 28 to 49 (SAKDSRSSAHPTTKLDHNRNAD) show a composition bias toward basic and acidic residues. Residues 50-63 (RPPSFSISRRSSSI) are compositionally biased toward low complexity. An N-linked (GlcNAc...) asparagine glycan is attached at Asn-74. Residues 127–147 (AITFSALVAAIVGIGFLVAVL) traverse the membrane as a helical segment. Ser-310 is an active-site residue. The next 2 membrane-spanning stretches (helical) occupy residues 795 to 815 (LYMR…ALVL) and 843 to 863 (IPLM…MAPA). 2 N-linked (GlcNAc...) asparagine glycosylation sites follow: Asn-865 and Asn-873. 3 consecutive transmembrane segments (helical) span residues 893–913 (PLFL…CTVF), 918–938 (LTLT…PGWI), and 965–985 (VLLL…VACL). N-linked (GlcNAc...) asparagine glycosylation occurs at Asn-1011. Helical transmembrane passes span 1015 to 1035 (SIFI…VVWV), 1052 to 1072 (VLSV…KMIP), and 1084 to 1104 (LLLF…AYTL).

It belongs to the GPI inositol-deacylase family.

Its subcellular location is the endoplasmic reticulum membrane. Involved in inositol deacylation of GPI-anchored proteins which plays important roles in the quality control and ER-associated degradation of GPI-anchored proteins. The sequence is that of GPI inositol-deacylase (BST1) from Chaetomium globosum (strain ATCC 6205 / CBS 148.51 / DSM 1962 / NBRC 6347 / NRRL 1970) (Soil fungus).